A 282-amino-acid chain; its full sequence is Shikimate dehydrogenase (NADP(+)) (282 aa).

Shikimate is bound by residues 15–17 (SKS) and Thr-62. Lys-66 (proton acceptor) is an active-site residue. Residues Asn-87 and Asp-103 each contribute to the shikimate site. NADP(+) contacts are provided by residues 127 to 131 (GAGGA), 151 to 156 (NRTHTK), and Met-220. Residue Tyr-222 participates in shikimate binding. Gly-244 is an NADP(+) binding site.

Belongs to the shikimate dehydrogenase family. As to quaternary structure, homodimer.

It catalyses the reaction shikimate + NADP(+) = 3-dehydroshikimate + NADPH + H(+). Its pathway is metabolic intermediate biosynthesis; chorismate biosynthesis; chorismate from D-erythrose 4-phosphate and phosphoenolpyruvate: step 4/7. In terms of biological role, involved in the biosynthesis of the chorismate, which leads to the biosynthesis of aromatic amino acids. Catalyzes the reversible NADPH linked reduction of 3-dehydroshikimate (DHSA) to yield shikimate (SA). The protein is Shikimate dehydrogenase (NADP(+)) of Shewanella baltica (strain OS195).